Here is a 367-residue protein sequence, read N- to C-terminus: Isocitrate dehydrogenase [NAD] regulatory subunit 1, mitochondrial (367 aa).

The N-terminal 25 residues, methionine 1–serine 25, are a transit peptide targeting the mitochondrion.

It belongs to the isocitrate and isopropylmalate dehydrogenases family. As to quaternary structure, heterooligomer of catalytic and regulatory subunits. As to expression, ubiquitous. Predominantly expressed in roots, stems and leaves.

The protein resides in the mitochondrion. Performs an essential role in the oxidative function of the citric acid cycle. This chain is Isocitrate dehydrogenase [NAD] regulatory subunit 1, mitochondrial (IDH1), found in Arabidopsis thaliana (Mouse-ear cress).